A 494-amino-acid polypeptide reads, in one-letter code: Acetylcholine receptor subunit epsilon (494 aa).

A signal peptide spans 1 to 20; that stretch reads MTMALLGTLLLLALFGRSQG. Residues 21–239 are Extracellular-facing; it reads KNEELSLYHH…VIYTLIIRRK (219 aa). 2 N-linked (GlcNAc...) asparagine glycosylation sites follow: Asn86 and Asn161. Cysteines 148 and 162 form a disulfide. A helical transmembrane segment spans residues 240–264; sequence PLFYVINIIVPCVLISGLVLLAYFL. Residues 265–272 are Cytoplasmic-facing; it reads PAQAGGQK. A helical membrane pass occupies residues 273 to 291; sequence CTVSINVLLAQTVFLFLIA. Residues 292–306 lie on the Extracellular side of the membrane; that stretch reads QKIPETSLSVPLLGR. The chain crosses the membrane as a helical span at residues 307–328; that stretch reads YLIFVMVVATLIVMNCVIVLNV. Topologically, residues 329–457 are cytoplasmic; sequence SLRTPTTHAT…WVRMGKALDN (129 aa). The chain crosses the membrane as a helical span at residues 458-481; sequence VCFWAALVLFSVGSTLIFLGGYFN. Residues 482 to 494 lie on the Extracellular side of the membrane; that stretch reads QVPDLPYPPCIQP.

It belongs to the ligand-gated ion channel (TC 1.A.9) family. Acetylcholine receptor (TC 1.A.9.1) subfamily. Epsilon/CHRNE sub-subfamily. Pentamer of two alpha chains, and one each of the beta, delta, and gamma (in immature muscle) or epsilon (in mature muscle) chains. The muscle heteropentamer composed of alpha-1, beta-1, delta, epsilon subunits interacts with the alpha-conotoxin ImII.

The protein resides in the postsynaptic cell membrane. It localises to the cell membrane. It carries out the reaction K(+)(in) = K(+)(out). The catalysed reaction is Na(+)(in) = Na(+)(out). Its function is as follows. After binding acetylcholine, the AChR responds by an extensive change in conformation that affects all subunits and leads to opening of an ion-conducting channel across the plasma membrane. The sequence is that of Acetylcholine receptor subunit epsilon (Chrne) from Rattus norvegicus (Rat).